The sequence spans 154 residues: Large ribosomal subunit protein uL13 (154 aa).

The protein belongs to the universal ribosomal protein uL13 family. As to quaternary structure, part of the 50S ribosomal subunit.

Its function is as follows. This protein is one of the early assembly proteins of the 50S ribosomal subunit, although it is not seen to bind rRNA by itself. It is important during the early stages of 50S assembly. The sequence is that of Large ribosomal subunit protein uL13 from Rhizobium etli (strain CIAT 652).